Here is a 147-residue protein sequence, read N- to C-terminus: UPF0735 ACT domain-containing protein GTNG_2535 (147 aa).

One can recognise an ACT domain in the interval 69-144 (TLFFHLEDRS…FVEKVEIVGS (76 aa)).

Belongs to the UPF0735 family.

The polypeptide is UPF0735 ACT domain-containing protein GTNG_2535 (Geobacillus thermodenitrificans (strain NG80-2)).